Here is a 457-residue protein sequence, read N- to C-terminus: 3-ketoacyl-CoA thiolase 5, peroxisomal (457 aa).

The transit peptide at 1 to 37 (MERAMERQKILLRHLNPVSSSNSSLKHEPSLLSPVNC) directs the protein to the peroxisome. The active-site Acyl-thioester intermediate is the C137. Catalysis depends on proton acceptor residues H394 and C426.

It belongs to the thiolase-like superfamily. Thiolase family. As to quaternary structure, homodimer. Expressed in seedlings and wounded leaves.

The protein resides in the peroxisome. It catalyses the reaction an acyl-CoA + acetyl-CoA = a 3-oxoacyl-CoA + CoA. Its pathway is lipid metabolism; fatty acid metabolism. Functionally, probably involved in long chain fatty-acid beta-oxidation prior to gluconeogenesis during germination and subsequent seedling growth. Involved in systemic jasmonic acid (JA) biosynthesis after wounding and may be during senescence. This chain is 3-ketoacyl-CoA thiolase 5, peroxisomal (KAT5), found in Arabidopsis thaliana (Mouse-ear cress).